The following is a 492-amino-acid chain: N-succinylglutamate 5-semialdehyde dehydrogenase (492 aa).

NAD(+) is bound at residue 220–225 (GSANTG). Catalysis depends on residues glutamate 243 and cysteine 277.

The protein belongs to the aldehyde dehydrogenase family. AstD subfamily.

The enzyme catalyses N-succinyl-L-glutamate 5-semialdehyde + NAD(+) + H2O = N-succinyl-L-glutamate + NADH + 2 H(+). The protein operates within amino-acid degradation; L-arginine degradation via AST pathway; L-glutamate and succinate from L-arginine: step 4/5. Catalyzes the NAD-dependent reduction of succinylglutamate semialdehyde into succinylglutamate. The polypeptide is N-succinylglutamate 5-semialdehyde dehydrogenase (Escherichia coli O6:H1 (strain CFT073 / ATCC 700928 / UPEC)).